Here is a 179-residue protein sequence, read N- to C-terminus: MEAFAAESGGMPQLNPEFWVSQIFWLIITFGILYVVLSKLILPKISANLENRKSQILENIEAAEKQREESEQKIEEYEKIVQSSKNEAKNYFKQAREKVLKDIGVKREILEKELDEEVNKAEIEIKTFRDNAPEKIKKIAVETSSDLLQELIGAEVNSSSISAIVEDLSRKKMDEYYGN.

Residues isoleucine 23–proline 43 form a helical membrane-spanning segment.

Belongs to the ATPase B chain family. F-type ATPases have 2 components, F(1) - the catalytic core - and F(0) - the membrane proton channel. F(1) has five subunits: alpha(3), beta(3), gamma(1), delta(1), epsilon(1). F(0) has three main subunits: a(1), b(2) and c(10-14). The alpha and beta chains form an alternating ring which encloses part of the gamma chain. F(1) is attached to F(0) by a central stalk formed by the gamma and epsilon chains, while a peripheral stalk is formed by the delta and b chains.

Its subcellular location is the cell inner membrane. Functionally, f(1)F(0) ATP synthase produces ATP from ADP in the presence of a proton or sodium gradient. F-type ATPases consist of two structural domains, F(1) containing the extramembraneous catalytic core and F(0) containing the membrane proton channel, linked together by a central stalk and a peripheral stalk. During catalysis, ATP synthesis in the catalytic domain of F(1) is coupled via a rotary mechanism of the central stalk subunits to proton translocation. Component of the F(0) channel, it forms part of the peripheral stalk, linking F(1) to F(0). The sequence is that of ATP synthase subunit b from Pelagibacter ubique (strain HTCC1062).